A 260-amino-acid polypeptide reads, in one-letter code: MILRLLECRFFTIALCDAAEPWQLGFQDAATPMMQGIIDLHHDIFFFLILILVFVLWMLVRALWHFNEQTNPIPQRIVHGTTIEIIWTIFPSVILLFIAIPSFALLYSMDGVLVDPAITIKAIGHQWYWTYEYSDYNSSDEQSLTFDSYMIPEDDLELGQLRLLEVDNRVVVPAKTHLRMIVTSADVLHSWAVPSLGVKCDAVPGRLNLTSILVQREGVYYGQCSEICGTNHAFMPIVVEAVTLKDYADWVSNQLILQTN.

Residues 1 to 43 lie on the Mitochondrial intermembrane side of the membrane; that stretch reads MILRLLECRFFTIALCDAAEPWQLGFQDAATPMMQGIIDLHHD. The chain crosses the membrane as a helical span at residues 44–64; that stretch reads IFFFLILILVFVLWMLVRALW. Topologically, residues 65–84 are mitochondrial matrix; sequence HFNEQTNPIPQRIVHGTTIE. The helical transmembrane segment at 85–105 threads the bilayer; the sequence is IIWTIFPSVILLFIAIPSFAL. The Mitochondrial intermembrane portion of the chain corresponds to 106–260; sequence LYSMDGVLVD…VSNQLILQTN (155 aa). Cu cation is bound by residues His189, Cys224, Glu226, Cys228, His232, and Met235. Mg(2+) is bound at residue Glu226.

Belongs to the cytochrome c oxidase subunit 2 family. Component of the cytochrome c oxidase (complex IV, CIV), a multisubunit enzyme composed of a catalytic core of 3 subunits and several supernumerary subunits. The complex exists as a monomer or a dimer and forms supercomplexes (SCs) in the inner mitochondrial membrane with ubiquinol-cytochrome c oxidoreductase (cytochrome b-c1 complex, complex III, CIII). Cu cation serves as cofactor.

It localises to the mitochondrion inner membrane. It catalyses the reaction 4 Fe(II)-[cytochrome c] + O2 + 8 H(+)(in) = 4 Fe(III)-[cytochrome c] + 2 H2O + 4 H(+)(out). Component of the cytochrome c oxidase, the last enzyme in the mitochondrial electron transport chain which drives oxidative phosphorylation. The respiratory chain contains 3 multisubunit complexes succinate dehydrogenase (complex II, CII), ubiquinol-cytochrome c oxidoreductase (cytochrome b-c1 complex, complex III, CIII) and cytochrome c oxidase (complex IV, CIV), that cooperate to transfer electrons derived from NADH and succinate to molecular oxygen, creating an electrochemical gradient over the inner membrane that drives transmembrane transport and the ATP synthase. Cytochrome c oxidase is the component of the respiratory chain that catalyzes the reduction of oxygen to water. Electrons originating from reduced cytochrome c in the intermembrane space (IMS) are transferred via the dinuclear copper A center (CU(A)) of subunit 2 and heme A of subunit 1 to the active site in subunit 1, a binuclear center (BNC) formed by heme A3 and copper B (CU(B)). The BNC reduces molecular oxygen to 2 water molecules using 4 electrons from cytochrome c in the IMS and 4 protons from the mitochondrial matrix. The protein is Cytochrome c oxidase subunit 2 (COX2) of Zea mays (Maize).